A 433-amino-acid chain; its full sequence is Glutamyl-tRNA reductase (433 aa).

Substrate contacts are provided by residues 49–52 (TCNR), Ser114, 119–121 (EPQ), and Gln125. The active-site Nucleophile is the Cys50. Residue 201–206 (GAGETI) coordinates NADP(+).

Belongs to the glutamyl-tRNA reductase family. Homodimer.

The catalysed reaction is (S)-4-amino-5-oxopentanoate + tRNA(Glu) + NADP(+) = L-glutamyl-tRNA(Glu) + NADPH + H(+). It participates in porphyrin-containing compound metabolism; protoporphyrin-IX biosynthesis; 5-aminolevulinate from L-glutamyl-tRNA(Glu): step 1/2. In terms of biological role, catalyzes the NADPH-dependent reduction of glutamyl-tRNA(Glu) to glutamate 1-semialdehyde (GSA). The chain is Glutamyl-tRNA reductase from Histophilus somni (strain 129Pt) (Haemophilus somnus).